A 451-amino-acid chain; its full sequence is Phosphoglucosamine mutase (451 aa).

The active-site Phosphoserine intermediate is the S107. Mg(2+)-binding residues include S107, D246, D248, and D250. At S107 the chain carries Phosphoserine.

This sequence belongs to the phosphohexose mutase family. The cofactor is Mg(2+). Post-translationally, activated by phosphorylation.

The enzyme catalyses alpha-D-glucosamine 1-phosphate = D-glucosamine 6-phosphate. Catalyzes the conversion of glucosamine-6-phosphate to glucosamine-1-phosphate. This is Phosphoglucosamine mutase from Burkholderia vietnamiensis (strain G4 / LMG 22486) (Burkholderia cepacia (strain R1808)).